A 71-amino-acid chain; its full sequence is UPF0352 protein Ssed_1809 (71 aa).

It belongs to the UPF0352 family.

The sequence is that of UPF0352 protein Ssed_1809 from Shewanella sediminis (strain HAW-EB3).